Here is a 130-residue protein sequence, read N- to C-terminus: Cytochrome c oxidase subunit 13, mitochondrial (130 aa).

A mitochondrion-targeting transit peptide spans 1-31 (MSMMNRNIGFLSRTLKTSVPKRAGLLSFRAY). Residues 32 to 61 (SNEAKVNWLEEVQAEEEHAKRSSEFWKKVT) are Mitochondrial matrix-facing. Residues 62-80 (YYIGGPALILASANAYYIY) form a helical membrane-spanning segment. Residues 81-130 (CKHQEHAKHVEDTDPGYSFENLRFKKYPWGDGSKTLFWNDKVNHLKKDDE) lie on the Mitochondrial intermembrane side of the membrane.

This sequence belongs to the cytochrome c oxidase subunit 6A family. Component of the cytochrome c oxidase (complex IV, CIV), a multisubunit enzyme composed of a catalytic core of 3 subunits and several supernumerary subunits. The complex exists as a monomer or a dimer and forms supercomplexes (SCs) in the inner mitochondrial membrane with ubiquinol-cytochrome c oxidoreductase (cytochrome b-c1 complex, complex III, CIII).

It localises to the mitochondrion inner membrane. Its pathway is energy metabolism; oxidative phosphorylation. Its function is as follows. Component of the cytochrome c oxidase, the last enzyme in the mitochondrial electron transport chain which drives oxidative phosphorylation. The respiratory chain contains 3 multisubunit complexes succinate dehydrogenase (complex II, CII), ubiquinol-cytochrome c oxidoreductase (cytochrome b-c1 complex, complex III, CIII) and cytochrome c oxidase (complex IV, CIV), that cooperate to transfer electrons derived from NADH and succinate to molecular oxygen, creating an electrochemical gradient over the inner membrane that drives transmembrane transport and the ATP synthase. Cytochrome c oxidase is the component of the respiratory chain that catalyzes the reduction of oxygen to water. Electrons originating from reduced cytochrome c in the intermembrane space (IMS) are transferred via the dinuclear copper A center (CU(A)) of subunit 2 and heme A of subunit 1 to the active site in subunit 1, a binuclear center (BNC) formed by heme A3 and copper B (CU(B)). The BNC reduces molecular oxygen to 2 water molecules unsing 4 electrons from cytochrome c in the IMS and 4 protons from the mitochondrial matrix. This chain is Cytochrome c oxidase subunit 13, mitochondrial (cox13), found in Schizosaccharomyces pombe (strain 972 / ATCC 24843) (Fission yeast).